Consider the following 255-residue polypeptide: ATP synthase subunit a 2 (255 aa).

A run of 5 helical transmembrane segments spans residues 24 to 44 (WFGINLDSMIMVWLTGLVFIL), 86 to 106 (LIGPLALTIFVWVLLMNAVDL), 131 to 151 (DINITMSMALGVFILVLGYTF), 205 to 225 (MIFILIALMPWWMQWALSVPW), and 226 to 246 (ALFHILIVVLQAFIFMVLTVV).

This sequence belongs to the ATPase A chain family. In terms of assembly, F-type ATPases have 2 components, CF(1) - the catalytic core - and CF(0) - the membrane proton channel. CF(1) has five subunits: alpha(3), beta(3), gamma(1), delta(1), epsilon(1). CF(0) has three main subunits: a(1), b(2) and c(9-12). The alpha and beta chains form an alternating ring which encloses part of the gamma chain. CF(1) is attached to CF(0) by a central stalk formed by the gamma and epsilon chains, while a peripheral stalk is formed by the delta and b chains.

It localises to the cell inner membrane. In terms of biological role, key component of the proton channel; it plays a direct role in the translocation of protons across the membrane. This is ATP synthase subunit a 2 from Vibrio campbellii (strain ATCC BAA-1116).